We begin with the raw amino-acid sequence, 334 residues long: Holliday junction branch migration complex subunit RuvB (334 aa).

Residues 4-184 (ADRLISAAVI…FGIVQRLEFY (181 aa)) form a large ATPase domain (RuvB-L) region. Residues Ile23, Arg24, Gly65, Lys68, Thr69, Thr70, 131–133 (EDY), Arg174, Tyr184, and Arg221 contribute to the ATP site. Thr69 is a Mg(2+) binding site. The interval 185–255 (QVADLEHIVS…VAMKALDMLN (71 aa)) is small ATPAse domain (RuvB-S). Residues 258 to 334 (AEGFDFMDRK…YKHFGITREE (77 aa)) form a head domain (RuvB-H) region. Positions 294, 313, and 318 each coordinate DNA.

It belongs to the RuvB family. As to quaternary structure, homohexamer. Forms an RuvA(8)-RuvB(12)-Holliday junction (HJ) complex. HJ DNA is sandwiched between 2 RuvA tetramers; dsDNA enters through RuvA and exits via RuvB. An RuvB hexamer assembles on each DNA strand where it exits the tetramer. Each RuvB hexamer is contacted by two RuvA subunits (via domain III) on 2 adjacent RuvB subunits; this complex drives branch migration. In the full resolvosome a probable DNA-RuvA(4)-RuvB(12)-RuvC(2) complex forms which resolves the HJ.

It localises to the cytoplasm. It catalyses the reaction ATP + H2O = ADP + phosphate + H(+). The RuvA-RuvB-RuvC complex processes Holliday junction (HJ) DNA during genetic recombination and DNA repair, while the RuvA-RuvB complex plays an important role in the rescue of blocked DNA replication forks via replication fork reversal (RFR). RuvA specifically binds to HJ cruciform DNA, conferring on it an open structure. The RuvB hexamer acts as an ATP-dependent pump, pulling dsDNA into and through the RuvAB complex. RuvB forms 2 homohexamers on either side of HJ DNA bound by 1 or 2 RuvA tetramers; 4 subunits per hexamer contact DNA at a time. Coordinated motions by a converter formed by DNA-disengaged RuvB subunits stimulates ATP hydrolysis and nucleotide exchange. Immobilization of the converter enables RuvB to convert the ATP-contained energy into a lever motion, pulling 2 nucleotides of DNA out of the RuvA tetramer per ATP hydrolyzed, thus driving DNA branch migration. The RuvB motors rotate together with the DNA substrate, which together with the progressing nucleotide cycle form the mechanistic basis for DNA recombination by continuous HJ branch migration. Branch migration allows RuvC to scan DNA until it finds its consensus sequence, where it cleaves and resolves cruciform DNA. This Yersinia pseudotuberculosis serotype O:1b (strain IP 31758) protein is Holliday junction branch migration complex subunit RuvB.